The following is a 343-amino-acid chain: Putative kinase HI_0665 (343 aa).

Asp209 serves as the catalytic Proton acceptor.

It belongs to the HipA Ser/Thr kinase family.

The protein is Putative kinase HI_0665 of Haemophilus influenzae (strain ATCC 51907 / DSM 11121 / KW20 / Rd).